The chain runs to 205 residues: Large ribosomal subunit protein bL21 (205 aa).

The disordered stretch occupies residues 107-137 (APAKKAAAKKEEAPKADTAPKAAAAPTEEAA). The span at 122–137 (ADTAPKAAAAPTEEAA) shows a compositional bias: low complexity.

It belongs to the bacterial ribosomal protein bL21 family. Part of the 50S ribosomal subunit. Contacts protein L20.

Functionally, this protein binds to 23S rRNA in the presence of protein L20. The chain is Large ribosomal subunit protein bL21 from Hyphomonas neptunium (strain ATCC 15444).